The primary structure comprises 122 residues: Large ribosomal subunit protein uL14 (122 aa).

It belongs to the universal ribosomal protein uL14 family. Part of the 50S ribosomal subunit. Forms a cluster with proteins L3 and L19. In the 70S ribosome, L14 and L19 interact and together make contacts with the 16S rRNA in bridges B5 and B8.

Its function is as follows. Binds to 23S rRNA. Forms part of two intersubunit bridges in the 70S ribosome. The protein is Large ribosomal subunit protein uL14 of Beutenbergia cavernae (strain ATCC BAA-8 / DSM 12333 / CCUG 43141 / JCM 11478 / NBRC 16432 / NCIMB 13614 / HKI 0122).